A 273-amino-acid chain; its full sequence is Putative pyruvate, phosphate dikinase regulatory protein (273 aa).

149 to 156 contributes to the ADP binding site; the sequence is GPSRTSKT.

It belongs to the pyruvate, phosphate/water dikinase regulatory protein family. PDRP subfamily.

It carries out the reaction N(tele)-phospho-L-histidyl/L-threonyl-[pyruvate, phosphate dikinase] + ADP = N(tele)-phospho-L-histidyl/O-phospho-L-threonyl-[pyruvate, phosphate dikinase] + AMP + H(+). It catalyses the reaction N(tele)-phospho-L-histidyl/O-phospho-L-threonyl-[pyruvate, phosphate dikinase] + phosphate + H(+) = N(tele)-phospho-L-histidyl/L-threonyl-[pyruvate, phosphate dikinase] + diphosphate. Its function is as follows. Bifunctional serine/threonine kinase and phosphorylase involved in the regulation of the pyruvate, phosphate dikinase (PPDK) by catalyzing its phosphorylation/dephosphorylation. The chain is Putative pyruvate, phosphate dikinase regulatory protein from Rickettsia africae (strain ESF-5).